Here is a 464-residue protein sequence, read N- to C-terminus: Citrate synthase, mitochondrial (464 aa).

The N-terminal 27 residues, 1–27 (MALLTAAARLFGAKNASCLVLAARHAS), are a transit peptide targeting the mitochondrion. An SIFI-degron motif is present at residues 2 to 21 (ALLTAAARLFGAKNASCLVL). Residue K76 is modified to N6-acetyllysine; alternate. K76 is modified (N6-succinyllysine; alternate). N6-succinyllysine is present on residues K103 and K193. S226 is subject to Phosphoserine. The active site involves H301. 2 positions are modified to N6-acetyllysine; alternate: K321 and K327. N6-succinyllysine; alternate is present on residues K321 and K327. H347 is a catalytic residue. Oxaloacetate is bound at residue R356. Residue K375 is modified to N6-acetyllysine; alternate. Position 375 is an N6-succinyllysine; alternate (K375). Position 382 is an N6-acetyllysine (K382). The residue at position 393 (K393) is an N6-acetyllysine; alternate. K393 is modified (N6-succinyllysine; alternate). Residue K395 is modified to N6,N6,N6-trimethyllysine. Residue D402 is part of the active site. Oxaloacetate contacts are provided by R428 and R448. Residue K450 is modified to N6-succinyllysine. An N6-acetyllysine; alternate modification is found at K459. Position 459 is an N6-succinyllysine; alternate (K459).

This sequence belongs to the citrate synthase family. As to quaternary structure, homodimer. In terms of processing, methylated. Trimethylation at Lys-395 by CSKMT decreases citrate synthase activity. In response to mitochondrial stress, the precursor protein is ubiquitinated by the SIFI complex in the cytoplasm before mitochondrial import, leading to its degradation. Within the SIFI complex, UBR4 initiates ubiquitin chain that are further elongated or branched by KCMF1.

The protein localises to the mitochondrion matrix. It carries out the reaction oxaloacetate + acetyl-CoA + H2O = citrate + CoA + H(+). It participates in carbohydrate metabolism; tricarboxylic acid cycle; isocitrate from oxaloacetate: step 1/2. Functionally, key enzyme of the Krebs tricarboxylic acid cycle which catalyzes the synthesis of citrate from acetyl coenzyme A and oxaloacetate. This is Citrate synthase, mitochondrial (CS) from Sus scrofa (Pig).